Here is a 489-residue protein sequence, read N- to C-terminus: Lysine--tRNA ligase (489 aa).

Mg(2+) contacts are provided by Glu399 and Glu406.

This sequence belongs to the class-II aminoacyl-tRNA synthetase family. Homodimer. It depends on Mg(2+) as a cofactor.

The protein localises to the cytoplasm. The catalysed reaction is tRNA(Lys) + L-lysine + ATP = L-lysyl-tRNA(Lys) + AMP + diphosphate. In Mycoplasma pneumoniae (strain ATCC 29342 / M129 / Subtype 1) (Mycoplasmoides pneumoniae), this protein is Lysine--tRNA ligase (lysS).